The chain runs to 263 residues: 3-methyl-2-oxobutanoate hydroxymethyltransferase (263 aa).

Positions 43 and 82 each coordinate Mg(2+). Residues 43 to 44 (DS), aspartate 82, and lysine 111 contribute to the 3-methyl-2-oxobutanoate site. Mg(2+) is bound at residue glutamate 113. The Proton acceptor role is filled by glutamate 180.

Belongs to the PanB family. As to quaternary structure, homodecamer; pentamer of dimers. The cofactor is Mg(2+).

It localises to the cytoplasm. The enzyme catalyses 3-methyl-2-oxobutanoate + (6R)-5,10-methylene-5,6,7,8-tetrahydrofolate + H2O = 2-dehydropantoate + (6S)-5,6,7,8-tetrahydrofolate. The protein operates within cofactor biosynthesis; (R)-pantothenate biosynthesis; (R)-pantoate from 3-methyl-2-oxobutanoate: step 1/2. Catalyzes the reversible reaction in which hydroxymethyl group from 5,10-methylenetetrahydrofolate is transferred onto alpha-ketoisovalerate to form ketopantoate. This is 3-methyl-2-oxobutanoate hydroxymethyltransferase from Bdellovibrio bacteriovorus (strain ATCC 15356 / DSM 50701 / NCIMB 9529 / HD100).